A 154-amino-acid chain; its full sequence is 3-dehydroquinate dehydratase (154 aa).

The Proton acceptor role is filled by Tyr23. Positions 75, 81, and 88 each coordinate substrate. The active-site Proton donor is the His101. Substrate contacts are provided by residues 102 to 103 (LS) and Arg112.

This sequence belongs to the type-II 3-dehydroquinase family. As to quaternary structure, homododecamer.

The enzyme catalyses 3-dehydroquinate = 3-dehydroshikimate + H2O. It participates in metabolic intermediate biosynthesis; chorismate biosynthesis; chorismate from D-erythrose 4-phosphate and phosphoenolpyruvate: step 3/7. Catalyzes a trans-dehydration via an enolate intermediate. This is 3-dehydroquinate dehydratase from Teredinibacter turnerae (strain ATCC 39867 / T7901).